A 129-amino-acid polypeptide reads, in one-letter code: Small ribosomal subunit protein uS12 (129 aa).

The tract at residues 1–25 (MPTYNQLVRFGRKSKTRKTKSPALE) is disordered. Over residues 10–20 (FGRKSKTRKTK) the composition is skewed to basic residues. At D89 the chain carries 3-methylthioaspartic acid. The disordered stretch occupies residues 109-129 (GRKQGRSRYGTPRKQVAVTKK).

The protein belongs to the universal ribosomal protein uS12 family. In terms of assembly, part of the 30S ribosomal subunit. Contacts proteins S8 and S17. May interact with IF1 in the 30S initiation complex.

In terms of biological role, with S4 and S5 plays an important role in translational accuracy. Interacts with and stabilizes bases of the 16S rRNA that are involved in tRNA selection in the A site and with the mRNA backbone. Located at the interface of the 30S and 50S subunits, it traverses the body of the 30S subunit contacting proteins on the other side and probably holding the rRNA structure together. The combined cluster of proteins S8, S12 and S17 appears to hold together the shoulder and platform of the 30S subunit. The chain is Small ribosomal subunit protein uS12 from Rickettsia peacockii (strain Rustic).